Here is a 92-residue protein sequence, read N- to C-terminus: Small ribosomal subunit protein uS19c (92 aa).

This sequence belongs to the universal ribosomal protein uS19 family.

Its subcellular location is the plastid. It localises to the chloroplast. In terms of biological role, protein S19 forms a complex with S13 that binds strongly to the 16S ribosomal RNA. The chain is Small ribosomal subunit protein uS19c from Pinus koraiensis (Korean pine).